We begin with the raw amino-acid sequence, 146 residues long: Globin-1 (146 aa).

Residues 9–146 (QLTADVKKDL…KLVAVVQAAL (138 aa)) enclose the Globin domain. Residue His-101 participates in heme b binding.

Belongs to the globin family. Homodimer.

The protein localises to the cytoplasm. This is Globin-1 from Anadara broughtonii (Blood clam).